Consider the following 146-residue polypeptide: MORN repeat-containing protein 4 (146 aa).

4 MORN repeats span residues 16-38, 39-61, 62-84, and 85-107; these read YRGE…DGGT, YLGH…DGSR, YEGE…DNMT, and FEGE…DGSH.

As to quaternary structure, interacts with MYO3A.

The protein localises to the cytoplasm. Its subcellular location is the cell projection. It localises to the filopodium tip. The protein resides in the stereocilium. Plays a role in promoting axonal degeneration following neuronal injury by toxic insult or trauma. The protein is MORN repeat-containing protein 4 (Morn4) of Rattus norvegicus (Rat).